The chain runs to 212 residues: Sentrin-specific protease 8 (212 aa).

Position 1 is an N-acetylmethionine (Met1). The tract at residues 11 to 174 (SLLRQSDVSL…MYVICNTEAL (164 aa)) is protease. Residues His102 and Asp119 contribute to the active site. The active-site Nucleophile is the Cys163.

Belongs to the peptidase C48 family. As to expression, broadly expressed, with highest levels in kidney and pancreas.

Its function is as follows. Protease that catalyzes two essential functions in the NEDD8 pathway: processing of full-length NEDD8 to its mature form and deconjugation of NEDD8 from targeted proteins such as cullins or p53. The sequence is that of Sentrin-specific protease 8 (SENP8) from Homo sapiens (Human).